We begin with the raw amino-acid sequence, 135 residues long: NADH-quinone oxidoreductase subunit K (135 aa).

The next 3 helical transmembrane spans lie at 33–53, 63–83, and 95–115; these read VLGL…FAIG, FLFM…AFVV, and IMFI…LAIL.

The protein belongs to the complex I subunit 4L family. As to quaternary structure, NDH-1 is composed of 14 different subunits. Subunits NuoA, H, J, K, L, M, N constitute the membrane sector of the complex.

The protein localises to the cell inner membrane. The enzyme catalyses a quinone + NADH + 5 H(+)(in) = a quinol + NAD(+) + 4 H(+)(out). NDH-1 shuttles electrons from NADH, via FMN and iron-sulfur (Fe-S) centers, to quinones in the respiratory chain. The immediate electron acceptor for the enzyme in this species is believed to be ubiquinone. Couples the redox reaction to proton translocation (for every two electrons transferred, four hydrogen ions are translocated across the cytoplasmic membrane), and thus conserves the redox energy in a proton gradient. The polypeptide is NADH-quinone oxidoreductase subunit K (Psychrobacter cryohalolentis (strain ATCC BAA-1226 / DSM 17306 / VKM B-2378 / K5)).